Consider the following 90-residue polypeptide: DNA-directed RNA polymerase subunit omega (90 aa).

The segment at 69–90 (RQEQQEQEAAELAAVSSIAHTR) is disordered.

Belongs to the RNA polymerase subunit omega family. In terms of assembly, the RNAP catalytic core consists of 2 alpha, 1 beta, 1 beta' and 1 omega subunit. When a sigma factor is associated with the core the holoenzyme is formed, which can initiate transcription.

It carries out the reaction RNA(n) + a ribonucleoside 5'-triphosphate = RNA(n+1) + diphosphate. Functionally, promotes RNA polymerase assembly. Latches the N- and C-terminal regions of the beta' subunit thereby facilitating its interaction with the beta and alpha subunits. This chain is DNA-directed RNA polymerase subunit omega, found in Vibrio atlanticus (strain LGP32) (Vibrio splendidus (strain Mel32)).